The following is a 432-amino-acid chain: 5'-deoxyadenosine deaminase (432 aa).

Zn(2+)-binding residues include His63 and His65. Positions 92 and 184 each coordinate substrate. Zn(2+) is bound at residue His211. Substrate-binding residues include Glu214 and Asp299. Residue Asp299 participates in Zn(2+) binding.

The protein belongs to the metallo-dependent hydrolases superfamily. MTA/SAH deaminase family. In terms of assembly, homotetramer. Requires Zn(2+) as cofactor.

The catalysed reaction is 5'-deoxyadenosine + H2O + H(+) = 5'-deoxyinosine + NH4(+). The enzyme catalyses S-adenosyl-L-homocysteine + H2O + H(+) = S-inosyl-L-homocysteine + NH4(+). It carries out the reaction S-methyl-5'-thioadenosine + H2O + H(+) = S-methyl-5'-thioinosine + NH4(+). It catalyses the reaction adenosine + H2O + H(+) = inosine + NH4(+). It functions in the pathway amino-acid biosynthesis; S-adenosyl-L-methionine biosynthesis. Catalyzes the deamination of three SAM-derived enzymatic products, namely 5'-deoxyadenosine, S-adenosyl-L-homocysteine, and 5'-methylthioadenosine, to produce the inosine analogs. Can also deaminate adenosine. The preferred substrate for this enzyme is 5'-deoxyadenosine, but all these substrates are efficiently deaminated. Likely functions in a S-adenosyl-L-methionine (SAM) recycling pathway from S-adenosyl-L-homocysteine (SAH) produced from SAM-dependent methylation reactions. May also be involved in the recycling of 5'-deoxyadenosine, whereupon the 5'-deoxyribose moiety of 5'-deoxyinosine is further metabolized to deoxyhexoses used for the biosynthesis of aromatic amino acids in methanogens. This is 5'-deoxyadenosine deaminase from Methanosarcina mazei (strain ATCC BAA-159 / DSM 3647 / Goe1 / Go1 / JCM 11833 / OCM 88) (Methanosarcina frisia).